The primary structure comprises 1033 residues: MHSGVNGCCPLRLPAAAAVHGRRIPPLLPPRGAWPGCIAAPALHRKPGRGGGGALSSCRRASHHEKLQVAALPSKATLEFEHGVSLRSAYIVPEDVQAAGFQIDADELASIVESRDTKKLTVHGQLNGIADKLGTSLTNGIVTDKDLLNQRQDIYGVNKFAETEIRSFWEFVWEALEDTTLIILSACAIFSLVVGITTEGWPQGAHDGVGIVASILLVVSVTGTSNYQQSLQFRDLDKEKRKILVQVTRNGLRQRVLIDDLLPGDAVHLAVGDQVPADGLFISGFSVLVDESSLTGESEPVFVNEDNPYLLSGTKVLDGSCKMLVTAVGMRTQWGKLMAVLTDGGDDETPLQTRLNGVANTIGKIGLFFAVLTFIVLSQGIIGQKYLDGLLLSWSGDDVLEILDHFAVAVTIVVVAVPEGLPLAVTLSLAFAMKKMMNDKALVRQLAACETMGSATVICSDKTGTLTTNRMTVVKACICGNTIQVNNPQTPNMSSNFPEVAVETLLESIFNNTSGEVVTNQDGKYQILGTPTETALLEFALLLDGDCKEKQLGSKIVKVEPFNSTKKRMSTILELPGGGYRAHCKGASEIVLAACDKFIDERGCIVPLDDKTSSKLNDIIKAFSSEALRTLCLAYREMEEGFSTQEQIPLQGYTCIGIVGIKDPVRPGVRQSVATCRSAGISVRMITGDNIDTAKAIARECGILTKDGIAIEGAEFREKSAEELHDLIPKMQVLARSSPLDKHTLVKHLRTAFNEVVAVTGDGTNDAPALREADIGLAMGIAGTEVAKESADVVILDDNFSTIVTVAKWGRSVYVNIQKFVQFQLTVNVVALLVNFTSACFTGDAPLTAVQLLWVNMIMDTLGALALATEPPNNNLMKKAPVGRKGKFITNVMWRNIVGQSLYQFAVMWYLQTQGKHLFGLEGYHADIVLNTIIFNTFVFCQVFNEISSREMEDINVLRGMAGNSIFLGVLTGTIFFQFILVQFLGDFANTTPLTQQQWLISILFGFLGMPIAAAIKLIAVEPHEKADTRRTP.

The Cytoplasmic segment spans residues 1–180 (MHSGVNGCCP…FVWEALEDTT (180 aa)). 2 helical membrane passes run 181–201 (LIILSACAIFSLVVGITTEGW) and 204–224 (GAHDGVGIVASILLVVSVTGT). Topologically, residues 225–268 (SNYQQSLQFRDLDKEKRKILVQVTRNGLRQRVLIDDLLPGDAVH) are cytoplasmic. Helical transmembrane passes span 269–289 (LAVGDQVPADGLFISGFSVLV) and 362–382 (IGKIGLFFAVLTFIVLSQGII). At 383-405 (GQKYLDGLLLSWSGDDVLEILDH) the chain is on the cytoplasmic side. Residues 406 to 426 (FAVAVTIVVVAVPEGLPLAVT) form a helical membrane-spanning segment. The active-site 4-aspartylphosphate intermediate is the aspartate 461. Mg(2+) contacts are provided by aspartate 762 and aspartate 766. A helical transmembrane segment spans residues 823-843 (FQLTVNVVALLVNFTSACFTG). Over 844-846 (DAP) the chain is Cytoplasmic. 2 helical membrane passes run 847-867 (LTAVQLLWVNMIMDTLGALAL) and 928-948 (IVLNTIIFNTFVFCQVFNEIS). Topologically, residues 949-965 (SREMEDINVLRGMAGNS) are cytoplasmic. 2 consecutive transmembrane segments (helical) span residues 966 to 986 (IFLGVLTGTIFFQFILVQFLG) and 999 to 1019 (WLISILFGFLGMPIAAAIKLI). Residues 1020-1033 (AVEPHEKADTRRTP) are Cytoplasmic-facing.

It belongs to the cation transport ATPase (P-type) (TC 3.A.3) family. Type IIB subfamily.

It is found in the membrane. The enzyme catalyses Ca(2+)(in) + ATP + H2O = Ca(2+)(out) + ADP + phosphate + H(+). Its activity is regulated as follows. Activated by calmodulin. Functionally, this magnesium-dependent enzyme catalyzes the hydrolysis of ATP coupled with the translocation of calcium from the cytosol out of the cell, into the endoplasmic reticulum, or into organelles. The chain is Calcium-transporting ATPase 3, plasma membrane-type from Oryza sativa subsp. japonica (Rice).